Consider the following 1086-residue polypeptide: Phosphinothricin tripeptide synthetase PhsC (1086 aa).

Residues 22–43 (RLRAAAAPGPDPAIPRRPDDDG) form a disordered region. Residues 45-484 (VPLSFAQHRL…LAALPVLTRD (440 aa)) form a condensation region. The tract at residues 510–901 (LEDSARRHPD…GRTDHQVKLR (392 aa)) is adenylation. The tract at residues 983–1007 (GKLDREALPDPLAQSGDTAGNRPPL) is disordered. The region spanning 1006–1081 (PLLDPVEERI…GLARSVSAER (76 aa)) is the Carrier domain. At serine 1041 the chain carries O-(pantetheine 4'-phosphoryl)serine.

It belongs to the NRP synthetase family. Pantetheine 4'-phosphate is required as a cofactor.

It carries out the reaction holo-[peptidyl-carrier protein] + L-alanine + ATP = L-alanyl-[peptidyl-carrier protein] + AMP + diphosphate. The protein operates within secondary metabolite biosynthesis; bialaphos biosynthesis. Functionally, involved in the biosynthesis of phosphinothricin tripeptide (PTT), also known as bialaphos (BA), a natural-product antibiotic and potent herbicide. Adenylates L-alanine and loads it onto a peptidyl carrier domain via a thioester linkage to the phosphopanthetheine moiety. Shows weaker activity with aminobutyric acid and L-serine. The protein is Phosphinothricin tripeptide synthetase PhsC of Streptomyces viridochromogenes (strain DSM 40736 / JCM 4977 / BCRC 1201 / Tue 494).